A 482-amino-acid chain; its full sequence is O-methyltransferase tpcA (482 aa).

S-adenosyl-L-methionine is bound by residues 293 to 294 (GG), Asp316, 348 to 349 (SF), and Arg364. The active-site Proton acceptor is His368.

This sequence belongs to the class I-like SAM-binding methyltransferase superfamily. Cation-independent O-methyltransferase family. Specifically expressed in conidia.

It participates in secondary metabolite biosynthesis. In terms of biological role, O-methyltransferase; part of the gene cluster that mediates the biosynthesis of trypacidin, a mycotoxin with antiprotozoal activity and that plays a role in the infection process. The pathway begins with the synthesis of atrochrysone thioester by the polyketide synthase (PKS) tpcC. The atrochrysone carboxyl ACP thioesterase tpcB then breaks the thioester bond and releases the atrochrysone carboxylic acid from tpcC. The decarboxylase tpcK converts atrochrysone carboxylic acid to atrochrysone which is further reduced into emodin anthrone. The next step is performed by the emodin anthrone oxygenase tpcL that catalyzes the oxidation of emodinanthrone to emodin. Emodin O-methyltransferase encoded by tpcA catalyzes methylation of the 8-hydroxy group of emodin to form questin. Ring cleavage of questin by questin oxidase tpcI leads to desmethylsulochrin via several intermediates including questin epoxide. Another methylation step catalyzed by tpcM leads to the formation of sulochrin which is further converted to monomethylsulfochrin by tpcH. Finally, the tpcJ catalyzes the conversion of monomethylsulfochrin to trypacidin. Trypacidin is toxic for human pulmonary and bronchial epithelial cells by initiating the intracellular formation of nitric oxide (NO) and hydrogen peroxide (H(2)O(2)), thus triggering host necrotic cell death. The trypacidin pathway is also able to produce endocrocin via a distinct route from the endocrocin Enc pathway. This is O-methyltransferase tpcA from Aspergillus fumigatus (strain ATCC MYA-4609 / CBS 101355 / FGSC A1100 / Af293) (Neosartorya fumigata).